The following is a 163-amino-acid chain: MKLNTLFNLNGAKKCSKRIGRGIGSGKGKTCGRGAKGQKSRAKVARGFEGGQTPLIKRLPKRGFKSMNKRNYNIINIITILRLVKANKIEYGAVIDKLLLLKLKMLKKSINKIKLLWANPSSLVLSSEDISLLTKLDLQFNLDEYSISARKNIIKLGMKVINN.

This sequence belongs to the universal ribosomal protein uL15 family. Part of the 50S ribosomal subunit.

Its function is as follows. Binds to the 23S rRNA. The protein is Large ribosomal subunit protein uL15 of Orientia tsutsugamushi (strain Boryong) (Rickettsia tsutsugamushi).